Here is a 633-residue protein sequence, read N- to C-terminus: Beta-myrcene synthase TPS15CT (633 aa).

The transit peptide at 1 to 55 directs the protein to the chloroplast; sequence MHCMAVHQFSPSIVSSLPTISTYNNNHFCRFFTPKTSISPISKTKSKSSTCYPIQ. 5 residues coordinate (2E)-geranyl diphosphate: R344, D381, D385, R525, and D528. Mg(2+) is bound by residues D381 and D385. A DDXXD motif motif is present at residues 381-385; it reads DDIYD. Mg(2+)-binding residues include D528, T532, and E536.

This sequence belongs to the terpene synthase family. Tpsb subfamily. It depends on Mg(2+) as a cofactor. Mn(2+) is required as a cofactor.

It localises to the plastid. Its subcellular location is the chloroplast. It catalyses the reaction (2E)-geranyl diphosphate = beta-myrcene + diphosphate. It functions in the pathway secondary metabolite biosynthesis; terpenoid biosynthesis. In terms of biological role, involved in monoterpene (C10) olefins biosynthesis, constituants of cannabinoids and terpenoids-rich resins. Catalyzes strictly the conversion of (2E)-geranyl diphosphate to beta-myrcene. This chain is Beta-myrcene synthase TPS15CT, found in Cannabis sativa (Hemp).